Here is a 194-residue protein sequence, read N- to C-terminus: Outer surface 22 kDa lipoprotein (194 aa).

The first 21 residues, 1-21 (MYKNGFFKNYLSLLLIFLVIA), serve as a signal peptide directing secretion. The N-palmitoyl cysteine moiety is linked to residue cysteine 22. Cysteine 22 carries the S-diacylglycerol cysteine lipid modification.

It is found in the cell outer membrane. The chain is Outer surface 22 kDa lipoprotein (p22) from Borreliella burgdorferi (strain N40) (Borrelia burgdorferi).